The sequence spans 484 residues: tRNA sulfurtransferase (484 aa).

Positions 63-167 constitute a THUMP domain; it reads EAFAERLACI…KESLYLVSKR (105 aa). ATP contacts are provided by residues 185-186, K267, G289, and Q298; that span reads LI. C346 and C458 are disulfide-bonded. Residues 406 to 484 form the Rhodanese domain; it reads INSGEVIIDV…GYDNVKVYRP (79 aa). The Cysteine persulfide intermediate role is filled by C458.

It belongs to the ThiI family.

The protein localises to the cytoplasm. The enzyme catalyses [ThiI sulfur-carrier protein]-S-sulfanyl-L-cysteine + a uridine in tRNA + 2 reduced [2Fe-2S]-[ferredoxin] + ATP + H(+) = [ThiI sulfur-carrier protein]-L-cysteine + a 4-thiouridine in tRNA + 2 oxidized [2Fe-2S]-[ferredoxin] + AMP + diphosphate. It carries out the reaction [ThiS sulfur-carrier protein]-C-terminal Gly-Gly-AMP + S-sulfanyl-L-cysteinyl-[cysteine desulfurase] + AH2 = [ThiS sulfur-carrier protein]-C-terminal-Gly-aminoethanethioate + L-cysteinyl-[cysteine desulfurase] + A + AMP + 2 H(+). It participates in cofactor biosynthesis; thiamine diphosphate biosynthesis. In terms of biological role, catalyzes the ATP-dependent transfer of a sulfur to tRNA to produce 4-thiouridine in position 8 of tRNAs, which functions as a near-UV photosensor. Also catalyzes the transfer of sulfur to the sulfur carrier protein ThiS, forming ThiS-thiocarboxylate. This is a step in the synthesis of thiazole, in the thiamine biosynthesis pathway. The sulfur is donated as persulfide by IscS. The sequence is that of tRNA sulfurtransferase from Shewanella woodyi (strain ATCC 51908 / MS32).